A 144-amino-acid polypeptide reads, in one-letter code: 3-hydroxyacyl-[acyl-carrier-protein] dehydratase FabZ (144 aa).

Histidine 47 is a catalytic residue.

This sequence belongs to the thioester dehydratase family. FabZ subfamily.

The protein localises to the cytoplasm. It carries out the reaction a (3R)-hydroxyacyl-[ACP] = a (2E)-enoyl-[ACP] + H2O. In terms of biological role, involved in unsaturated fatty acids biosynthesis. Catalyzes the dehydration of short chain beta-hydroxyacyl-ACPs and long chain saturated and unsaturated beta-hydroxyacyl-ACPs. This Nitrosomonas eutropha (strain DSM 101675 / C91 / Nm57) protein is 3-hydroxyacyl-[acyl-carrier-protein] dehydratase FabZ.